We begin with the raw amino-acid sequence, 374 residues long: Putative F-box protein At3g16590 (374 aa).

The F-box domain maps to 1 to 45; it reads MPTKLPLELEDEILLRVPPLSLTRFRTVCKRWNTLFNDQRFINNH.

The chain is Putative F-box protein At3g16590 from Arabidopsis thaliana (Mouse-ear cress).